Reading from the N-terminus, the 306-residue chain is Probable protein ABIL1 (306 aa).

A disordered region spans residues 200–236; it reads KNSKTNGARQSEFVLEETKATKPASRGKEPSTSPLPK.

Belongs to the ABI family. Binds SCAR.

The protein localises to the cytoplasm. It localises to the cytoskeleton. Functionally, involved in regulation of actin and microtubule organization. Part of a WAVE complex that activates the Arp2/3 complex. This Oryza sativa subsp. japonica (Rice) protein is Probable protein ABIL1.